We begin with the raw amino-acid sequence, 119 residues long: Venom allergen 2 (119 aa).

This sequence belongs to the ant venom allergen 2/4 family. In terms of assembly, homodimer; disulfide-linked. In terms of tissue distribution, expressed by the venom gland.

It localises to the secreted. The chain is Venom allergen 2 from Solenopsis richteri (Black imported fire ant).